Here is a 393-residue protein sequence, read N- to C-terminus: NADH-quinone oxidoreductase subunit D (393 aa).

This sequence belongs to the complex I 49 kDa subunit family. As to quaternary structure, NDH-1 is composed of 14 different subunits. Subunits NuoB, C, D, E, F, and G constitute the peripheral sector of the complex.

Its subcellular location is the cell inner membrane. The enzyme catalyses a quinone + NADH + 5 H(+)(in) = a quinol + NAD(+) + 4 H(+)(out). Its function is as follows. NDH-1 shuttles electrons from NADH, via FMN and iron-sulfur (Fe-S) centers, to quinones in the respiratory chain. The immediate electron acceptor for the enzyme in this species is believed to be ubiquinone. Couples the redox reaction to proton translocation (for every two electrons transferred, four hydrogen ions are translocated across the cytoplasmic membrane), and thus conserves the redox energy in a proton gradient. This chain is NADH-quinone oxidoreductase subunit D, found in Ehrlichia chaffeensis (strain ATCC CRL-10679 / Arkansas).